A 112-amino-acid polypeptide reads, in one-letter code: Large ribosomal subunit protein uL24 (112 aa).

Residues 92 to 112 (ERDGKQKTVRVRVSKSTGKDL) form a disordered region.

It belongs to the universal ribosomal protein uL24 family. As to quaternary structure, part of the 50S ribosomal subunit.

One of two assembly initiator proteins, it binds directly to the 5'-end of the 23S rRNA, where it nucleates assembly of the 50S subunit. Its function is as follows. One of the proteins that surrounds the polypeptide exit tunnel on the outside of the subunit. This is Large ribosomal subunit protein uL24 from Kocuria rhizophila (strain ATCC 9341 / DSM 348 / NBRC 103217 / DC2201).